Consider the following 176-residue polypeptide: Beta-carotene hydroxylase (176 aa).

The Fatty acid hydroxylase domain maps to 10–126; it reads LSVIAMEGIA…AHRLHHAVRG (117 aa). The tract at residues 152-176 is disordered; the sequence is HGRPPKRDAAKDRPDAASPSSSSPE. The span at 156–166 shows a compositional bias: basic and acidic residues; sequence PKRDAAKDRPD. Positions 167–176 are enriched in low complexity; sequence AASPSSSSPE.

Belongs to the sterol desaturase family.

Its pathway is carotenoid biosynthesis; zeaxanthin biosynthesis. Its function is as follows. Catalyzes the hydroxylation reaction from beta-carotene to zeaxanthin. This chain is Beta-carotene hydroxylase (crtZ), found in Pseudescherichia vulneris (Escherichia vulneris).